A 508-amino-acid polypeptide reads, in one-letter code: Photosystem II CP47 reaction center protein (508 aa).

The next 6 membrane-spanning stretches (helical) occupy residues A21–S36, I101–W115, G140–F156, I203–C218, V237–V252, and C457–R472.

This sequence belongs to the PsbB/PsbC family. PsbB subfamily. In terms of assembly, PSII is composed of 1 copy each of membrane proteins PsbA, PsbB, PsbC, PsbD, PsbE, PsbF, PsbH, PsbI, PsbJ, PsbK, PsbL, PsbM, PsbT, PsbX, PsbY, PsbZ, Psb30/Ycf12, at least 3 peripheral proteins of the oxygen-evolving complex and a large number of cofactors. It forms dimeric complexes. Binds multiple chlorophylls. PSII binds additional chlorophylls, carotenoids and specific lipids. serves as cofactor.

It is found in the plastid. It localises to the chloroplast thylakoid membrane. Its function is as follows. One of the components of the core complex of photosystem II (PSII). It binds chlorophyll and helps catalyze the primary light-induced photochemical processes of PSII. PSII is a light-driven water:plastoquinone oxidoreductase, using light energy to abstract electrons from H(2)O, generating O(2) and a proton gradient subsequently used for ATP formation. The sequence is that of Photosystem II CP47 reaction center protein from Chlorella vulgaris (Green alga).